A 151-amino-acid polypeptide reads, in one-letter code: SsrA-binding protein (151 aa).

It belongs to the SmpB family.

It is found in the cytoplasm. Its function is as follows. Required for rescue of stalled ribosomes mediated by trans-translation. Binds to transfer-messenger RNA (tmRNA), required for stable association of tmRNA with ribosomes. tmRNA and SmpB together mimic tRNA shape, replacing the anticodon stem-loop with SmpB. tmRNA is encoded by the ssrA gene; the 2 termini fold to resemble tRNA(Ala) and it encodes a 'tag peptide', a short internal open reading frame. During trans-translation Ala-aminoacylated tmRNA acts like a tRNA, entering the A-site of stalled ribosomes, displacing the stalled mRNA. The ribosome then switches to translate the ORF on the tmRNA; the nascent peptide is terminated with the 'tag peptide' encoded by the tmRNA and targeted for degradation. The ribosome is freed to recommence translation, which seems to be the essential function of trans-translation. This is SsrA-binding protein from Nitrosomonas europaea (strain ATCC 19718 / CIP 103999 / KCTC 2705 / NBRC 14298).